A 437-amino-acid polypeptide reads, in one-letter code: MAVSKVYARSVYDSRGNPTVEVELTTEKGVFRSIVPSGASTGVHEALEMRDEDKSKWMGKGVMNAVNNVNNVIAAAFVKANLDVKDQKAVDDFLLSLDGTANKSKLGANAILGVSMAAARAAAAEKNVPLYQHLADLSKSKTSPYVLPVPFLNVLNGGSHAGGALALQEFMIAPTGAKTFAEAMRIGSEVYHNLKSLTKKRYGASAGNVGDEGGVAPNIQTAEEALDLIVDAIKAAGHDGKVKIGLDCASSEFFKDGKYDLDFKNPESDKSKWLTGVELADMYHSLMKRYPIVSIEDPFAEDDWEAWSHFFKTAGIQIVADDLTVTNPARIATAIEKKAADALLLKVNQIGTLSESIKAAQDSFAANWGVMVSHRSGETEDTFIADLVVGLRTGQIKTGAPARSERLAKLNQLLRIEEELGDKAVYAGENFHHGDKL.

Residue Lys-60 forms a Glycyl lysine isopeptide (Lys-Gly) (interchain with G-Cter in ubiquitin) linkage. Ser-138 is subject to Phosphoserine. His-160 is a catalytic residue. Residue Ser-188 is modified to Phosphoserine. Residue Lys-243 forms a Glycyl lysine isopeptide (Lys-Gly) (interchain with G-Cter in ubiquitin) linkage. 2 residues coordinate Mg(2+): Asp-247 and Glu-296. Phosphothreonine is present on Thr-313. Asp-321 is a binding site for Mg(2+). Thr-324 is modified (phosphothreonine). Residue Lys-358 forms a Glycyl lysine isopeptide (Lys-Gly) (interchain with G-Cter in ubiquitin) linkage.

The protein belongs to the enolase family. Homodimer. The cofactor is Mg(2+).

Its subcellular location is the cytoplasm. The catalysed reaction is (2R)-2-phosphoglycerate = phosphoenolpyruvate + H2O. It functions in the pathway carbohydrate degradation; glycolysis; pyruvate from D-glyceraldehyde 3-phosphate: step 4/5. The polypeptide is Enolase 2 (ENO2) (Saccharomyces cerevisiae (strain ATCC 204508 / S288c) (Baker's yeast)).